The chain runs to 580 residues: Isochorismate synthase, chloroplastic (580 aa).

A chloroplast-targeting transit peptide spans 1-91; that stretch reads MASITGHCVA…LAMERLSSAV (91 aa).

It belongs to the isochorismate synthase family. Mg(2+) serves as cofactor.

It localises to the plastid. The protein resides in the chloroplast. The catalysed reaction is chorismate = isochorismate. Its activity is regulated as follows. Not inhibited by Tyr, Phe or Trp. In terms of biological role, involved in the synthesis of o-succinylbenzoic acid, 2,3-dihydroxybenzoic acid and salicylic acid (SA). This is Isochorismate synthase, chloroplastic from Catharanthus roseus (Madagascar periwinkle).